The following is a 1267-amino-acid chain: Ankyrin repeat and ELMO domain-containing protein D (1267 aa).

Residues 307 to 466 (SHQRLLETLW…FVSGLASEVL (160 aa)) form the ELMO domain. A compositionally biased stretch (basic and acidic residues) spans 486-496 (KKKEKKSEKRG). Residues 486–598 (KKKEKKSEKR…NNHILNNNHL (113 aa)) are disordered. The span at 507-598 (GSNGNINSTT…NNHILNNNHL (92 aa)) shows a compositional bias: low complexity. ANK repeat units follow at residues 655–685 (DGNSPLHSAIMNSMTLDCITNGININLFLNT), 689–718 (QGLTPLNLACSISPYLIIDFFLQQDTDPFI), 767–796 (TLETPLSTAIQSGNEDSVGHLLTLCPNINN), and 801–830 (SGQNALHIAISKRNLHIITCLIQNGADPSI). 4 disordered regions span residues 854–908 (NPTK…NSTS), 924–1040 (TSIN…SPIF), 1057–1082 (SPTQESPQVISTPTSPPYLSNNNGAE), and 1103–1215 (ENLT…PPKD). Composition is skewed to low complexity over residues 859 to 870 (SRSTSSTSSSTS), 895 to 908 (ITNNNSIQYSNSTS), and 924 to 1033 (TSIN…STSP). Polar residues predominate over residues 1057-1080 (SPTQESPQVISTPTSPPYLSNNNG). Composition is skewed to low complexity over residues 1108-1176 (NSGN…IGSH) and 1184-1213 (HNGPINNGNYPNYRGNNITTSPVGVTVTPP).

The sequence is that of Ankyrin repeat and ELMO domain-containing protein D (elmoD) from Dictyostelium discoideum (Social amoeba).